The primary structure comprises 328 residues: Pyruvate dehydrogenase E1 component subunit beta (328 aa).

A thiamine diphosphate-binding site is contributed by E60. 3 residues coordinate K(+): I113, I162, and N166.

In terms of assembly, heterodimer of an alpha and a beta chain. Thiamine diphosphate is required as a cofactor.

The protein localises to the plastid. It localises to the chloroplast. The enzyme catalyses N(6)-[(R)-lipoyl]-L-lysyl-[protein] + pyruvate + H(+) = N(6)-[(R)-S(8)-acetyldihydrolipoyl]-L-lysyl-[protein] + CO2. Its function is as follows. The pyruvate dehydrogenase complex catalyzes the overall conversion of pyruvate to acetyl-CoA and CO(2). It contains multiple copies of three enzymatic components: pyruvate dehydrogenase (E1), dihydrolipoamide acetyltransferase (E2) and lipoamide dehydrogenase (E3). The chain is Pyruvate dehydrogenase E1 component subunit beta (pdhB) from Staurastrum punctulatum (Green alga).